The sequence spans 537 residues: Chaperonin GroEL (537 aa).

ATP contacts are provided by residues 29-32 (TLGP), 86-90 (DGTTT), Gly413, 477-479 (NAA), and Asp493.

The protein belongs to the chaperonin (HSP60) family. As to quaternary structure, forms a cylinder of 14 subunits composed of two heptameric rings stacked back-to-back. Interacts with the co-chaperonin GroES.

It is found in the cytoplasm. It catalyses the reaction ATP + H2O + a folded polypeptide = ADP + phosphate + an unfolded polypeptide.. Together with its co-chaperonin GroES, plays an essential role in assisting protein folding. The GroEL-GroES system forms a nano-cage that allows encapsulation of the non-native substrate proteins and provides a physical environment optimized to promote and accelerate protein folding. This Lactobacillus delbrueckii subsp. bulgaricus (strain ATCC 11842 / DSM 20081 / BCRC 10696 / JCM 1002 / NBRC 13953 / NCIMB 11778 / NCTC 12712 / WDCM 00102 / Lb 14) protein is Chaperonin GroEL.